Here is a 407-residue protein sequence, read N- to C-terminus: Aspartate aminotransferase, cytoplasmic (407 aa).

Residues glycine 39, tryptophan 136, and asparagine 189 each contribute to the L-aspartate site. Lysine 253 bears the N6-(pyridoxal phosphate)lysine mark. L-aspartate is bound at residue arginine 381.

The protein belongs to the class-I pyridoxal-phosphate-dependent aminotransferase family. As to quaternary structure, homodimer. The cofactor is pyridoxal 5'-phosphate.

It localises to the cytoplasm. It catalyses the reaction L-aspartate + 2-oxoglutarate = oxaloacetate + L-glutamate. In terms of biological role, important for the metabolism of amino acids and Krebs-cycle related organic acids. In plants, it is involved in nitrogen metabolism and in aspects of carbon and energy metabolism. The polypeptide is Aspartate aminotransferase, cytoplasmic (Oryza sativa subsp. japonica (Rice)).